The sequence spans 475 residues: MSPQTETKASVEFKAGVKDYKLTYYTPEYETLDTDILAAFRVSPQPGVPPEEAGAAVAAESSTGTWTTVWTDGLTNLDRYKGRCYHIEPVAGEENQYICYVAYPLDLFEEGSVTNMFTSIVGNVFGFKALRALRLEDLRIPVAYVKTFQGPPHGIQVERDKLNKYGRPLLGCTIKPKLGLSAKNYGRAVYECLRGGLDFTKDDENVNSQPFMRWRDRFLFCAEALYKAQAETGEIKGHYLNATAGTCEDMMKRAVFARELGVPIVMHDYLTGGFTANTTLSHYCRDNGLLLHIHRAMHAVIDRQKNHGMHFRVLAKALRLSGGDHIHSGTVVGKLEGERDITLGFVDLLRDDYTEKDRSRGIYFTQSWVSTPGVLPVASGGIHVWHMPALTEIFGDDSVLQFGGGTLGHPWGNAPGAVANRVALEACVQARNEGRDLAREGNTIIREATKWSPELAAACEVWKEIKFEFPAMDTV.

Residues Met-1–Ser-2 constitute a propeptide that is removed on maturation. Pro-3 is modified (N-acetylproline). Substrate contacts are provided by Thr-65, Asn-123, and Thr-173. The Proton acceptor role is filled by Lys-175. A substrate-binding site is contributed by Lys-177. Positions 201, 203, and 204 each coordinate Mg(2+). An N6-carboxylysine modification is found at Lys-201. The substrate site is built by Glu-204, His-294, Arg-295, His-327, Lys-334, Ser-379, Gly-381, Gly-403, and Gly-404. The active-site Proton acceptor is the His-294.

This sequence belongs to the RuBisCO large chain family. Type I subfamily. In terms of assembly, heterohexadecamer of 8 large chains and 8 small chains. The cofactor is Mg(2+). The disulfide bond which can form between Cys-247 in the large chain dimeric partners within the hexadecamer appears to be associated with oxidative stress and protein turnover. The disulfide bonds reported in 1RBO may be the result of oxidation during crystallization.

The protein resides in the plastid. It is found in the chloroplast. It catalyses the reaction 2 (2R)-3-phosphoglycerate + 2 H(+) = D-ribulose 1,5-bisphosphate + CO2 + H2O. The catalysed reaction is D-ribulose 1,5-bisphosphate + O2 = 2-phosphoglycolate + (2R)-3-phosphoglycerate + 2 H(+). With respect to regulation, abscisic acid (ABA) causes weak inhibition of RuBisCO catalytic activity, but more potent inhibition of RuBisCO activation. Functionally, ruBisCO catalyzes two reactions: the carboxylation of D-ribulose 1,5-bisphosphate, the primary event in carbon dioxide fixation, as well as the oxidative fragmentation of the pentose substrate in the photorespiration process. Both reactions occur simultaneously and in competition at the same active site. Binds to abscisic acid (ABA) which has weakly inhibits carboxylation and more strongly inhibits enzyme activation. This Spinacia oleracea (Spinach) protein is Ribulose bisphosphate carboxylase large chain.